The following is a 246-amino-acid chain: Ribonuclease 3 (246 aa).

Residues 30–152 (ISWIEKNLGH…MIGAIFLESG (123 aa)) enclose the RNase III domain. E65 lines the Mg(2+) pocket. D69 is a catalytic residue. Residues D138 and E141 each coordinate Mg(2+). E141 is an active-site residue. Residues 177–246 (HPKSALQEWA…AQALLDILAQ (70 aa)) form the DRBM domain.

The protein belongs to the ribonuclease III family. In terms of assembly, homodimer. Mg(2+) serves as cofactor.

Its subcellular location is the cytoplasm. The catalysed reaction is Endonucleolytic cleavage to 5'-phosphomonoester.. Its function is as follows. Digests double-stranded RNA. Involved in the processing of primary rRNA transcript to yield the immediate precursors to the large and small rRNAs (23S and 16S). Processes some mRNAs, and tRNAs when they are encoded in the rRNA operon. Processes pre-crRNA and tracrRNA of type II CRISPR loci if present in the organism. The polypeptide is Ribonuclease 3 (Zymomonas mobilis subsp. mobilis (strain ATCC 31821 / ZM4 / CP4)).